Reading from the N-terminus, the 142-residue chain is Large ribosomal subunit protein uL11 (142 aa).

The protein belongs to the universal ribosomal protein uL11 family. Part of the ribosomal stalk of the 50S ribosomal subunit. Interacts with L10 and the large rRNA to form the base of the stalk. L10 forms an elongated spine to which L12 dimers bind in a sequential fashion forming a multimeric L10(L12)X complex. In terms of processing, one or more lysine residues are methylated.

In terms of biological role, forms part of the ribosomal stalk which helps the ribosome interact with GTP-bound translation factors. The chain is Large ribosomal subunit protein uL11 from Pasteurella multocida (strain Pm70).